Consider the following 137-residue polypeptide: Putative protein YjhV (137 aa).

The span at 1–16 shows a compositional bias: polar residues; it reads MVGYHQTNQKTDTGKT. Residues 1-20 are disordered; that stretch reads MVGYHQTNQKTDTGKTLTRR.

The chain is Putative protein YjhV (yjhV) from Escherichia coli (strain K12).